The primary structure comprises 846 residues: Neurofilament medium polypeptide (846 aa).

Positions 1–10 are enriched in polar residues; the sequence is MSYTLDSLGN. The disordered stretch occupies residues 1–52; the sequence is MSYTLDSLGNPSAYRRVPTETRSSFSRVSGSPSSGFRSQSWSRGSPSTVSSS. Residue Ser2 is modified to N-acetylserine. Residues 2 to 104 are head; that stretch reads SYTLDSLGNP…LSRSNEKEQL (103 aa). The span at 22-45 shows a compositional bias: low complexity; it reads RSSFSRVSGSPSSGFRSQSWSRGS. Ser31 is modified (phosphoserine). Arg43 bears the Omega-N-methylarginine mark. O-linked (GlcNAc) threonine glycosylation occurs at Thr48. Ser98 carries the phosphoserine modification. The IF rod domain maps to 100-411; that stretch reads EKEQLQGLND…KLLEGEETRF (312 aa). Positions 104-135 are coil 1A; that stretch reads LQGLNDRFAGYIEKVHYLEQQNKEIEAEIHAL. Positions 136–148 are linker 1; the sequence is RQKQASHAQLGDA. The tract at residues 149 to 247 is coil 1B; the sequence is YDQEIRELRA…EEEVADLLAQ (99 aa). Residue Ser225 is modified to Phosphoserine. Positions 248 to 264 are linker 12; that stretch reads IQASHITVERKDYLKTD. A coil 2A region spans residues 265–286; that stretch reads ISTALKEIRSQLECHSDQNMHQ. The tract at residues 287–290 is linker 2; the sequence is AEEW. The segment at 291–411 is coil 2B; the sequence is FKCRYAKLTE…KLLEGEETRF (121 aa). The residue at position 319 (Tyr319) is a Phosphotyrosine. 3 positions are modified to phosphoserine: Ser345, Ser417, and Ser429. Residues 412-845 are tail; the sequence is STFSGSITGP…HAIVKEVTQG (434 aa). O-linked (GlcNAc) threonine glycosylation occurs at Thr431. Phosphoserine occurs at positions 467 and 483. The tract at residues 483–783 is disordered; the sequence is SAKEEKEEAE…GEDRSDDKVV (301 aa). The span at 489-499 shows a compositional bias: acidic residues; the sequence is EEAEEKEEEPE. Residues 500-510 are compositionally biased toward basic and acidic residues; that stretch reads VEKSPVKSPEA. 2 positions are modified to phosphoserine: Ser503 and Ser507. A compositionally biased stretch (acidic residues) spans 511-533; that stretch reads KEEEEGEKEEEEEGQEEEEEEDE. Residues 534–553 show a composition bias toward basic and acidic residues; sequence GVKSDQAEEGGSEKEGSSEK. A phosphoserine mark is found at Ser537, Ser545, Ser550, and Ser551. The span at 554 to 575 shows a compositional bias: acidic residues; that stretch reads DEGEQEEEGETEAEGEGEEAEA. Thr564 is subject to Phosphothreonine. A compositionally biased stretch (basic and acidic residues) spans 576-603; sequence KEEKKTEGKVEEMAIKEEIKVEKPEKAK. Phosphoserine is present on residues Ser604, Ser609, Ser643, Ser667, Ser687, Ser713, Ser721, Ser751, and Ser767. Composition is skewed to basic and acidic residues over residues 610 to 675 and 687 to 709; these read PVEE…KAVE and SLEK…KAEE. Basic and acidic residues-rich tracts occupy residues 718–730 and 746–758; these read GDKS…KEDI and TQEK…EEKG. A compositionally biased stretch (basic and acidic residues) spans 769 to 783; that stretch reads AEEKKGEDRSDDKVV.

Belongs to the intermediate filament family. In terms of assembly, forms heterodimers with NEFL; which can further hetero-oligomerize (in vitro). Forms heterodimers with INA (in vitro). In terms of processing, there are a number of repeats of the tripeptide K-S-P, NFM is phosphorylated on a number of the serines in this motif. It is thought that phosphorylation of NFM results in the formation of interfilament cross bridges that are important in the maintenance of axonal caliber. Phosphorylation seems to play a major role in the functioning of the larger neurofilament polypeptides (NF-M and NF-H), the levels of phosphorylation being altered developmentally and coincidentally with a change in the neurofilament function. Post-translationally, phosphorylated in the head and rod regions by the PKC kinase PKN1, leading to the inhibition of polymerization. Expressed in the dorsal root ganglion neurons (at protein level).

It is found in the cytoplasm. It localises to the cytoskeleton. The protein localises to the cell projection. Its subcellular location is the axon. Neurofilaments usually contain three intermediate filament proteins: NEFL, NEFM, and NEFH which are involved in the maintenance of neuronal caliber. May additionally cooperate with the neuronal intermediate filament proteins PRPH and INA to form neuronal filamentous networks. In Rattus norvegicus (Rat), this protein is Neurofilament medium polypeptide (Nefm).